Here is a 294-residue protein sequence, read N- to C-terminus: 7,8-dihydropterin-6-methyl-4-(beta-D-ribofuranosyl)-aminobenzene-5'-phosphate synthase (294 aa).

Substrate is bound by residues glutamate 116, aspartate 186, lysine 228, and histidine 265.

This sequence belongs to the metallo-beta-lactamase superfamily. Requires Mg(2+) as cofactor.

The catalysed reaction is 4-(beta-D-ribofuranosyl)aminobenzene 5'-phosphate + (7,8-dihydropterin-6-yl)methyl diphosphate = N-[(7,8-dihydropterin-6-yl)methyl]-4-(beta-D-ribofuranosyl)aniline 5'-phosphate + diphosphate. It participates in cofactor biosynthesis; 5,6,7,8-tetrahydromethanopterin biosynthesis. Functionally, catalyzes the condensation of 6-hydroxymethyl-7,8-dihydropterin pyrophosphate (DHPP) with 4-(beta-D-ribofuranosyl)-aminobenzene-5'-phosphate (beta-RFA-P) to form 7,8-dihydropterin-6-methyl-4-(beta-D-ribofuranosyl)-aminobenzene-5'-phosphate, a precursor in the biosynthesis of 5,6,7,8-tetrahydromethanopterin (H4MPT). To a lesser extent, is able to condense beta-RFA-P with another arylamine, 1-(4-aminophenyl)-1-deoxy-D-ribitol (APDR), to form 7,8-dihydropterin-6-methyl-1-(4-aminophenyl)-1-deoxy-D-ribitol. Dephosphorylated beta-RFA-P is not a substrate. The protein is 7,8-dihydropterin-6-methyl-4-(beta-D-ribofuranosyl)-aminobenzene-5'-phosphate synthase of Methanocaldococcus jannaschii (strain ATCC 43067 / DSM 2661 / JAL-1 / JCM 10045 / NBRC 100440) (Methanococcus jannaschii).